The following is a 657-amino-acid chain: Threonine--tRNA ligase (657 aa).

In terms of domain architecture, TGS spans 7–70 (DRQQVIITLP…TENARVSIIT (64 aa)). The segment at 253–555 (DHRKLGAELG…LIEHTAGNFP (303 aa)) is catalytic. Residues cysteine 351, histidine 402, and histidine 532 each contribute to the Zn(2+) site.

This sequence belongs to the class-II aminoacyl-tRNA synthetase family. In terms of assembly, homodimer. The cofactor is Zn(2+).

It localises to the cytoplasm. The catalysed reaction is tRNA(Thr) + L-threonine + ATP = L-threonyl-tRNA(Thr) + AMP + diphosphate + H(+). Its function is as follows. Catalyzes the attachment of threonine to tRNA(Thr) in a two-step reaction: L-threonine is first activated by ATP to form Thr-AMP and then transferred to the acceptor end of tRNA(Thr). Also edits incorrectly charged L-seryl-tRNA(Thr). This is Threonine--tRNA ligase from Chlorobaculum tepidum (strain ATCC 49652 / DSM 12025 / NBRC 103806 / TLS) (Chlorobium tepidum).